We begin with the raw amino-acid sequence, 343 residues long: Sodium/bile acid cotransporter 7 (343 aa).

Over 1 to 10 (MGLLERLRKE) the chain is Cytoplasmic. A helical transmembrane segment spans residues 11 to 31 (WFIVGIILVIAAAKLEPTIGG). At 32 to 37 (KGGPLK) the chain is on the extracellular side. A helical membrane pass occupies residues 38–58 (PEITITYIAVSAIFFNSGLSL). The Cytoplasmic segment spans residues 59–71 (KTEELTNALMHVK). A helical transmembrane segment spans residues 72-92 (LHLFVQLFTLVFFPTAIWVFL). The Extracellular segment spans residues 93–116 (QVLSLTPINEWLLKGLQTVSCMPP). Residues 117-137 (PVSSAVILTKAVGGNEAAAIF) form a helical membrane-spanning segment. Asn138 is a topological domain (cytoplasmic). The chain crosses the membrane as a helical span at residues 139 to 159 (SAFGSFLGIVVTPLLLLLFLG). At 160–163 (SSSS) the chain is on the extracellular side. A helical transmembrane segment spans residues 164 to 184 (VPFTSIFSQLFMTVVVPLIIG). Residues 185-201 (QIVRRYIKDWLERKKPP) lie on the Cytoplasmic side of the membrane. The helical transmembrane segment at 202–222 (FGAISSCVLLMIIYTTFCDTF) threads the bilayer. The Extracellular segment spans residues 223-234 (SNPNIDLDTFSL). The chain crosses the membrane as a helical span at residues 235 to 255 (VIIVFIIFFIQLAFMLLTFLF). Over 256–270 (STSKNTGFTPADTVA) the chain is Cytoplasmic. A helical membrane pass occupies residues 271-291 (IVFCSTHKSLTLGIPMLKIVF). Topologically, residues 292–298 (AGYEHLS) are extracellular. A helical transmembrane segment spans residues 299–319 (LISVPLLIYHPAQILLGSVLV). Over 320–343 (PTIKSWMLSRQKALKLTRQPKVPL) the chain is Cytoplasmic.

The protein belongs to the bile acid:sodium symporter (BASS) (TC 2.A.28) family.

It is found in the cell membrane. The protein resides in the endoplasmic reticulum membrane. It localises to the golgi apparatus membrane. Functionally, involved in teeth and skeletal development. Has an essential role in the biosynthesis and trafficking of glycosaminoglycans and glycoproteins to produce a proper functioning extracellular matrix. Required for extracellular matrix mineralization. Also involved in the regulation of cellular calcium homeostasis. Does not show transport activity towards bile acids or steroid sulfates. In Xenopus tropicalis (Western clawed frog), this protein is Sodium/bile acid cotransporter 7 (slc10a7).